The sequence spans 48 residues: U-reduvitoxin-Pr5a (48 aa).

The N-terminal stretch at 1–19 (MRLFLIFTFIVASLASVYG) is a signal peptide. 3 disulfides stabilise this stretch: Cys20-Cys34, Cys27-Cys39, and Cys33-Cys44.

It belongs to the venom Ptu1-like knottin family. As to expression, expressed by the venom gland.

It is found in the secreted. Binds reversibly and blocks P/Q-type voltage-gated calcium channels (Cav). The sequence is that of U-reduvitoxin-Pr5a from Platymeris rhadamanthus (Red spot assassin bug).